A 157-amino-acid polypeptide reads, in one-letter code: 6,7-dimethyl-8-ribityllumazine synthase (157 aa).

Residues phenylalanine 24, 58–60 (SFE), and 82–84 (AVI) each bind 5-amino-6-(D-ribitylamino)uracil. 87–88 (ET) lines the (2S)-2-hydroxy-3-oxobutyl phosphate pocket. Catalysis depends on histidine 90, which acts as the Proton donor. Phenylalanine 115 lines the 5-amino-6-(D-ribitylamino)uracil pocket. Arginine 129 is a binding site for (2S)-2-hydroxy-3-oxobutyl phosphate.

Belongs to the DMRL synthase family.

It carries out the reaction (2S)-2-hydroxy-3-oxobutyl phosphate + 5-amino-6-(D-ribitylamino)uracil = 6,7-dimethyl-8-(1-D-ribityl)lumazine + phosphate + 2 H2O + H(+). It functions in the pathway cofactor biosynthesis; riboflavin biosynthesis; riboflavin from 2-hydroxy-3-oxobutyl phosphate and 5-amino-6-(D-ribitylamino)uracil: step 1/2. Functionally, catalyzes the formation of 6,7-dimethyl-8-ribityllumazine by condensation of 5-amino-6-(D-ribitylamino)uracil with 3,4-dihydroxy-2-butanone 4-phosphate. This is the penultimate step in the biosynthesis of riboflavin. The chain is 6,7-dimethyl-8-ribityllumazine synthase from Thermus thermophilus (strain ATCC BAA-163 / DSM 7039 / HB27).